The chain runs to 299 residues: 4-hydroxy-tetrahydrodipicolinate synthase (299 aa).

T44 contacts pyruvate. Residue Y133 is the Proton donor/acceptor of the active site. The active-site Schiff-base intermediate with substrate is the K162. I204 provides a ligand contact to pyruvate.

The protein belongs to the DapA family. In terms of assembly, homotetramer; dimer of dimers.

It localises to the cytoplasm. The enzyme catalyses L-aspartate 4-semialdehyde + pyruvate = (2S,4S)-4-hydroxy-2,3,4,5-tetrahydrodipicolinate + H2O + H(+). It participates in amino-acid biosynthesis; L-lysine biosynthesis via DAP pathway; (S)-tetrahydrodipicolinate from L-aspartate: step 3/4. In terms of biological role, catalyzes the condensation of (S)-aspartate-beta-semialdehyde [(S)-ASA] and pyruvate to 4-hydroxy-tetrahydrodipicolinate (HTPA). This chain is 4-hydroxy-tetrahydrodipicolinate synthase, found in Thermus thermophilus (strain ATCC BAA-163 / DSM 7039 / HB27).